The following is a 111-amino-acid chain: Microtubule nucleation factor SSNA1 (111 aa).

Positions 6–71 form a coiled coil; it reads QALQNHNNEL…ARKTETKNEY (66 aa).

Belongs to the SSNA1 family. As to quaternary structure, self-assembles into fibrils in a head-to-tail fashion.

Its subcellular location is the cytoplasm. The protein localises to the cytoskeleton. It is found in the flagellum basal body. The protein resides in the flagellum axoneme. Its function is as follows. Microtubule-binding protein which stabilizes dynamic microtubules by slowing growth and shrinkage at both plus and minus ends and serves as a sensor of microtubule damage. Induces microtubule branching which is mediated by the formation of long SSNA1 fibrils which guide microtubule protofilaments to split apart from the mother microtubule and form daughter microtubules. Required for cell division. The chain is Microtubule nucleation factor SSNA1 from Chlamydomonas reinhardtii (Chlamydomonas smithii).